Here is a 135-residue protein sequence, read N- to C-terminus: Small ribosomal subunit protein bS16 (135 aa).

A compositionally biased stretch (basic and acidic residues) spans 105–120 (DEKKKPVLKPKTEKAA). Residues 105–135 (DEKKKPVLKPKTEKAAPEAAAPEAEATEEQA) are disordered.

This sequence belongs to the bacterial ribosomal protein bS16 family.

This chain is Small ribosomal subunit protein bS16, found in Clavibacter sepedonicus (Clavibacter michiganensis subsp. sepedonicus).